The sequence spans 193 residues: Adenine phosphoribosyltransferase (193 aa).

It belongs to the purine/pyrimidine phosphoribosyltransferase family. In terms of assembly, homodimer.

Its subcellular location is the cytoplasm. The catalysed reaction is AMP + diphosphate = 5-phospho-alpha-D-ribose 1-diphosphate + adenine. Its pathway is purine metabolism; AMP biosynthesis via salvage pathway; AMP from adenine: step 1/1. Functionally, catalyzes a salvage reaction resulting in the formation of AMP, that is energically less costly than de novo synthesis. In Bifidobacterium animalis subsp. lactis (strain AD011), this protein is Adenine phosphoribosyltransferase.